The following is a 417-amino-acid chain: NADH-quinone oxidoreductase subunit D (417 aa).

It belongs to the complex I 49 kDa subunit family. As to quaternary structure, NDH-1 is composed of 14 different subunits. Subunits NuoB, C, D, E, F, and G constitute the peripheral sector of the complex.

It is found in the cell inner membrane. It catalyses the reaction a quinone + NADH + 5 H(+)(in) = a quinol + NAD(+) + 4 H(+)(out). Its function is as follows. NDH-1 shuttles electrons from NADH, via FMN and iron-sulfur (Fe-S) centers, to quinones in the respiratory chain. The immediate electron acceptor for the enzyme in this species is believed to be ubiquinone. Couples the redox reaction to proton translocation (for every two electrons transferred, four hydrogen ions are translocated across the cytoplasmic membrane), and thus conserves the redox energy in a proton gradient. The polypeptide is NADH-quinone oxidoreductase subunit D (Coxiella burnetii (strain Dugway 5J108-111)).